The sequence spans 405 residues: Tryptophan synthase beta chain (405 aa).

Lysine 98 bears the N6-(pyridoxal phosphate)lysine mark.

Belongs to the TrpB family. Tetramer of two alpha and two beta chains. Pyridoxal 5'-phosphate serves as cofactor.

It carries out the reaction (1S,2R)-1-C-(indol-3-yl)glycerol 3-phosphate + L-serine = D-glyceraldehyde 3-phosphate + L-tryptophan + H2O. The protein operates within amino-acid biosynthesis; L-tryptophan biosynthesis; L-tryptophan from chorismate: step 5/5. In terms of biological role, the beta subunit is responsible for the synthesis of L-tryptophan from indole and L-serine. This chain is Tryptophan synthase beta chain, found in Methylococcus capsulatus (strain ATCC 33009 / NCIMB 11132 / Bath).